We begin with the raw amino-acid sequence, 128 residues long: Large ribosomal subunit protein bL17 (128 aa).

This sequence belongs to the bacterial ribosomal protein bL17 family. As to quaternary structure, part of the 50S ribosomal subunit. Contacts protein L32.

This is Large ribosomal subunit protein bL17 from Streptococcus uberis (strain ATCC BAA-854 / 0140J).